We begin with the raw amino-acid sequence, 246 residues long: Adenylate kinase 4 (246 aa).

Alanine 2 carries the post-translational modification N-acetylalanine. Glycine 43 to threonine 48 serves as a coordination point for ATP. The NMP stretch occupies residues serine 63 to valine 92. AMP-binding positions include threonine 64, arginine 69, glutamate 90–valine 92, glycine 118–arginine 121, and glutamine 125. Residues glycine 159–aspartate 196 form an LID region. Arginine 160 is an ATP binding site. The AMP site is built by arginine 193 and arginine 204.

The protein belongs to the adenylate kinase family. In terms of assembly, monomer.

It is found in the cytoplasm. The enzyme catalyses AMP + ATP = 2 ADP. Its function is as follows. Catalyzes the reversible transfer of the terminal phosphate group between ATP and AMP. Plays an important role in cellular energy homeostasis and in adenine nucleotide metabolism. This Arabidopsis thaliana (Mouse-ear cress) protein is Adenylate kinase 4 (ADK1).